The sequence spans 596 residues: Arginine--tRNA ligase (596 aa).

Positions Ala-128–His-138 match the 'HIGH' region motif.

The protein belongs to the class-I aminoacyl-tRNA synthetase family. In terms of assembly, monomer.

Its subcellular location is the cytoplasm. It carries out the reaction tRNA(Arg) + L-arginine + ATP = L-arginyl-tRNA(Arg) + AMP + diphosphate. This Acinetobacter baumannii (strain AB307-0294) protein is Arginine--tRNA ligase.